The primary structure comprises 1314 residues: Enfumafungin synthase efuA (1314 aa).

The segment at M1–G680 is terpenne cyclase. 2 PFTB repeats span residues L19–L62 and G66–G107. 3 helical membrane passes run F133–M153, A155–A175, and Y230–L250. The stretch at L260–S300 is one PFTB 3 repeat. Residue D395 is the Proton donor of the active site. PFTB repeat units follow at residues V417–V458 and C546–R597. Residues I681–K1314 are glycosyltransferase. A helical membrane pass occupies residues A1200 to K1220. Residues D1289 to K1314 are disordered. Low complexity predominate over residues A1292–G1302.

The protein in the N-terminal section; belongs to the terpene cyclase/mutase family. In the C-terminal section; belongs to the glycosyltransferase 28 family.

The protein localises to the membrane. It functions in the pathway secondary metabolite biosynthesis; terpenoid biosynthesis. Its function is as follows. Terpene cyclase-glycosyl transferase fusion protein; part of the gene cluster that mediates the biosynthesis of enfumafungin, a glycosylated fernene-type triterpenoid with potent antifungal activity, mediated by its interaction with beta-1,3-glucan synthase and the fungal cell wall. The pathway begins with the terpene cyclase-glycosyl transferase fusion protein that most likely uses 2,3-oxidosqualene as substrate and catalyzes glycosylation immediately after cyclization. The fernene glycoside then could be processed by the desaturase efuI which catalyzes isomerization of a double bond established by efuA to form the core structure. The latter would then undergo a series of hydroxylations in unknown order at C-2, C-19, C-23 and C-25, which would be catalyzed by two of the three cytochrome P450 monooxygenases efuB, efuG or efuH. The hydroxy-group at C-25 becomes oxidized by the dehydrogenase efuE to enable a spontaneous, non-enzymatic hemiacetal formation with C-23. After hydroxylation at C-2, acetylation by the acetyltransferase efuC takes place. The final steps in enfumafungin biosynthesis require expansion of the 5-membered ring by lactonization via a Baeyer-Villiger reaction mediated by one of the BGC's cytochrome P450 monooxygenases (efuB, efuG or efuH) followed by ring cleavage. This type of reaction would establish a double bond between C-20 and C-21 which could be reduced by the reductase efuL to form the final product. The polypeptide is Enfumafungin synthase efuA (Hormonema carpetanum).